We begin with the raw amino-acid sequence, 432 residues long: uncharacterized protein (432 aa).

SIS domains lie at 105-244 and 277-422; these read WLTE…DLVS and CDKK…VDLP.

This is an uncharacterized protein from Saccharomyces cerevisiae (strain ATCC 204508 / S288c) (Baker's yeast).